Reading from the N-terminus, the 585-residue chain is Switch-associated protein 70 (585 aa).

Residues aspartate 210–histidine 306 enclose the PH domain. Positions histidine 316–lysine 532 form a coiled coil.

The SWAP complex consists of NPM1, NCL, PARP1 and SWAP70. Post-translationally, tyrosine-phosphorylated.

Its subcellular location is the cytoplasm. It is found in the cell membrane. The protein resides in the nucleus. It localises to the cell projection. The protein localises to the lamellipodium. Its function is as follows. Phosphatidylinositol 3,4,5-trisphosphate-dependent guanine nucleotide exchange factor (GEF) which, independently of RAS, transduces signals from tyrosine kinase receptors to RAC. It also mediates signaling of membrane ruffling. Regulates the actin cytoskeleton as an effector or adapter protein in response to agonist stimulated phosphatidylinositol (3,4)-bisphosphate production and cell protrusion. In Bos taurus (Bovine), this protein is Switch-associated protein 70 (SWAP70).